The following is a 129-amino-acid chain: Small ribosomal subunit protein uS11 (129 aa).

The protein belongs to the universal ribosomal protein uS11 family. As to quaternary structure, part of the 30S ribosomal subunit. Interacts with proteins S7 and S18. Binds to IF-3.

Functionally, located on the platform of the 30S subunit, it bridges several disparate RNA helices of the 16S rRNA. Forms part of the Shine-Dalgarno cleft in the 70S ribosome. This chain is Small ribosomal subunit protein uS11, found in Bradyrhizobium diazoefficiens (strain JCM 10833 / BCRC 13528 / IAM 13628 / NBRC 14792 / USDA 110).